A 142-amino-acid chain; its full sequence is Large ribosomal subunit protein uL22 (142 aa).

The segment at 122–142 is disordered; sequence RAEAPEETKPSRGTNKEQKAA.

This sequence belongs to the universal ribosomal protein uL22 family. Part of the 50S ribosomal subunit.

In terms of biological role, this protein binds specifically to 23S rRNA; its binding is stimulated by other ribosomal proteins, e.g. L4, L17, and L20. It is important during the early stages of 50S assembly. It makes multiple contacts with different domains of the 23S rRNA in the assembled 50S subunit and ribosome. Its function is as follows. The globular domain of the protein is located near the polypeptide exit tunnel on the outside of the subunit, while an extended beta-hairpin is found that lines the wall of the exit tunnel in the center of the 70S ribosome. The sequence is that of Large ribosomal subunit protein uL22 from Gluconobacter oxydans (strain 621H) (Gluconobacter suboxydans).